The following is a 786-amino-acid chain: Endonuclease MutS2 (786 aa).

335 to 342 serves as a coordination point for ATP; it reads GPNTGGKT. In terms of domain architecture, Smr spans 711 to 786; sequence LDLRGERFEN…GLGVTVVELK (76 aa).

This sequence belongs to the DNA mismatch repair MutS family. MutS2 subfamily. As to quaternary structure, homodimer. Binds to stalled ribosomes, contacting rRNA.

In terms of biological role, endonuclease that is involved in the suppression of homologous recombination and thus may have a key role in the control of bacterial genetic diversity. Functionally, acts as a ribosome collision sensor, splitting the ribosome into its 2 subunits. Detects stalled/collided 70S ribosomes which it binds and splits by an ATP-hydrolysis driven conformational change. Acts upstream of the ribosome quality control system (RQC), a ribosome-associated complex that mediates the extraction of incompletely synthesized nascent chains from stalled ribosomes and their subsequent degradation. Probably generates substrates for RQC. This Bacillus cereus (strain AH820) protein is Endonuclease MutS2.